We begin with the raw amino-acid sequence, 346 residues long: Probable choline kinase 3 (346 aa).

ATP is bound by residues Arg71, Gln207, and Asp224.

Belongs to the choline/ethanolamine kinase family.

It carries out the reaction choline + ATP = phosphocholine + ADP + H(+). The protein operates within phospholipid metabolism; phosphatidylcholine biosynthesis; phosphocholine from choline: step 1/1. Involved in phospholipid biosynthesis. Catalyzes the first step in phosphatidylcholine biosynthesis. The protein is Probable choline kinase 3 of Arabidopsis thaliana (Mouse-ear cress).